A 520-amino-acid polypeptide reads, in one-letter code: Poly(A)-specific ribonuclease PNLDC1 (520 aa).

Mg(2+) contacts are provided by aspartate 17, glutamate 19, aspartate 260, and aspartate 354. Residues 497–513 form a helical membrane-spanning segment; that stretch reads CLLQVCGIVTAWALLAF.

Belongs to the CAF1 family. Mg(2+) serves as cofactor.

It is found in the endoplasmic reticulum membrane. The catalysed reaction is Exonucleolytic cleavage of poly(A) to 5'-AMP.. Its function is as follows. 3'-exoribonuclease that has a preference for poly(A) tails of mRNAs, thereby efficiently degrading poly(A) tails. Exonucleolytic degradation of the poly(A) tail is often the first step in the decay of eukaryotic mRNAs and is also used to silence certain maternal mRNAs translationally during oocyte maturation and early embryonic development. May act as a regulator of multipotency in embryonic stem cells. Is a critical factor for proper spermatogenesis, involved in pre-piRNAs processing to generate mature piRNAs. This Pongo abelii (Sumatran orangutan) protein is Poly(A)-specific ribonuclease PNLDC1.